A 132-amino-acid polypeptide reads, in one-letter code: Small ribosomal subunit protein uS12 (132 aa).

Aspartate 89 carries the post-translational modification 3-methylthioaspartic acid.

Belongs to the universal ribosomal protein uS12 family. Part of the 30S ribosomal subunit. Contacts proteins S8 and S17. May interact with IF1 in the 30S initiation complex.

Functionally, with S4 and S5 plays an important role in translational accuracy. Its function is as follows. Interacts with and stabilizes bases of the 16S rRNA that are involved in tRNA selection in the A site and with the mRNA backbone. Located at the interface of the 30S and 50S subunits, it traverses the body of the 30S subunit contacting proteins on the other side and probably holding the rRNA structure together. The combined cluster of proteins S8, S12 and S17 appears to hold together the shoulder and platform of the 30S subunit. This Campylobacter curvus (strain 525.92) protein is Small ribosomal subunit protein uS12.